A 330-amino-acid polypeptide reads, in one-letter code: tRNA pseudouridine synthase B (330 aa).

The active-site Nucleophile is the Asp-42.

The protein belongs to the pseudouridine synthase TruB family. Type 1 subfamily.

The enzyme catalyses uridine(55) in tRNA = pseudouridine(55) in tRNA. Responsible for synthesis of pseudouridine from uracil-55 in the psi GC loop of transfer RNAs. The polypeptide is tRNA pseudouridine synthase B (Lactococcus lactis subsp. cremoris (strain SK11)).